Reading from the N-terminus, the 482-residue chain is UDP-N-acetylmuramate--L-alanine ligase (482 aa).

111-117 is a binding site for ATP; the sequence is GTHGKTT.

The protein belongs to the MurCDEF family.

The protein resides in the cytoplasm. The catalysed reaction is UDP-N-acetyl-alpha-D-muramate + L-alanine + ATP = UDP-N-acetyl-alpha-D-muramoyl-L-alanine + ADP + phosphate + H(+). It functions in the pathway cell wall biogenesis; peptidoglycan biosynthesis. Cell wall formation. The sequence is that of UDP-N-acetylmuramate--L-alanine ligase from Symbiobacterium thermophilum (strain DSM 24528 / JCM 14929 / IAM 14863 / T).